The following is a 329-amino-acid chain: 4-hydroxythreonine-4-phosphate dehydrogenase (329 aa).

Substrate-binding residues include His136 and Thr137. Residues His166, His211, and His266 each coordinate a divalent metal cation. Substrate is bound by residues Lys274, Asn283, and Arg292.

Belongs to the PdxA family. As to quaternary structure, homodimer. Zn(2+) serves as cofactor. The cofactor is Mg(2+). Requires Co(2+) as cofactor.

The protein localises to the cytoplasm. It carries out the reaction 4-(phosphooxy)-L-threonine + NAD(+) = 3-amino-2-oxopropyl phosphate + CO2 + NADH. It functions in the pathway cofactor biosynthesis; pyridoxine 5'-phosphate biosynthesis; pyridoxine 5'-phosphate from D-erythrose 4-phosphate: step 4/5. Catalyzes the NAD(P)-dependent oxidation of 4-(phosphooxy)-L-threonine (HTP) into 2-amino-3-oxo-4-(phosphooxy)butyric acid which spontaneously decarboxylates to form 3-amino-2-oxopropyl phosphate (AHAP). The protein is 4-hydroxythreonine-4-phosphate dehydrogenase of Salmonella typhimurium (strain LT2 / SGSC1412 / ATCC 700720).